Consider the following 361-residue polypeptide: UDP-N-acetylglucosamine--N-acetylmuramyl-(pentapeptide) pyrophosphoryl-undecaprenol N-acetylglucosamine transferase (361 aa).

Residues Thr-12–Gly-14, Asn-126, Arg-167, Ser-192, Ile-247, and Gln-292 contribute to the UDP-N-acetyl-alpha-D-glucosamine site.

The protein belongs to the glycosyltransferase 28 family. MurG subfamily.

The protein localises to the cell inner membrane. The catalysed reaction is di-trans,octa-cis-undecaprenyl diphospho-N-acetyl-alpha-D-muramoyl-L-alanyl-D-glutamyl-meso-2,6-diaminopimeloyl-D-alanyl-D-alanine + UDP-N-acetyl-alpha-D-glucosamine = di-trans,octa-cis-undecaprenyl diphospho-[N-acetyl-alpha-D-glucosaminyl-(1-&gt;4)]-N-acetyl-alpha-D-muramoyl-L-alanyl-D-glutamyl-meso-2,6-diaminopimeloyl-D-alanyl-D-alanine + UDP + H(+). It functions in the pathway cell wall biogenesis; peptidoglycan biosynthesis. Functionally, cell wall formation. Catalyzes the transfer of a GlcNAc subunit on undecaprenyl-pyrophosphoryl-MurNAc-pentapeptide (lipid intermediate I) to form undecaprenyl-pyrophosphoryl-MurNAc-(pentapeptide)GlcNAc (lipid intermediate II). This Syntrophus aciditrophicus (strain SB) protein is UDP-N-acetylglucosamine--N-acetylmuramyl-(pentapeptide) pyrophosphoryl-undecaprenol N-acetylglucosamine transferase.